A 61-amino-acid polypeptide reads, in one-letter code: MAKLKITLRKSAAHRLPEQRKMVKEFGLNRVNSSVIKPDDAATRGVIFKLAHLVTVEEIKD.

This sequence belongs to the universal ribosomal protein uL30 family. Part of the 50S ribosomal subunit.

This chain is Large ribosomal subunit protein uL30, found in Latilactobacillus sakei subsp. sakei (strain 23K) (Lactobacillus sakei subsp. sakei).